The sequence spans 339 residues: Dipeptide transport system permease protein DppB (339 aa).

Topologically, residues 1–9 are periplasmic; that stretch reads MLQFILRRL. The chain crosses the membrane as a helical span at residues 10–30; it reads GLVIPTFIGITLLTFAFVHMI. Residues 31 to 102 are Cytoplasmic-facing; it reads PGDPVMIMAG…VPRFQATLEL (72 aa). Residues 96–328 form the ABC transmembrane type-1 domain; that stretch reads FQATLELGVC…LVNLLVDLLY (233 aa). Residues 103–123 form a helical membrane-spanning segment; it reads GVCAMIFATAVGIPVGVLAAV. At 124–135 the chain is on the periplasmic side; it reads KRGSIFDHTAVG. A helical membrane pass occupies residues 136–156; that stretch reads LALTGYSMPIFWWGMMLIMLV. The Cytoplasmic portion of the chain corresponds to 157–171; sequence SVHWNLTPVSGRVSD. A helical membrane pass occupies residues 172–192; sequence MVFLDDSNPLTGFMLIDTAIW. Residues 193–200 are Periplasmic-facing; that stretch reads GEDGNFID. Residues 201–221 traverse the membrane as a helical segment; sequence AVAHMILPAIVLGTIPLAVIV. At 222 to 259 the chain is on the cytoplasmic side; that stretch reads RMTRSSMLEVLGEDYIRTARAKGLTRMRVIIVHALRNA. Residues 260–280 traverse the membrane as a helical segment; it reads MLPVVTVIGLQVGTLLAGAIL. Topologically, residues 281 to 309 are periplasmic; that stretch reads TETIFSWPGLGRWLIDALQRRDYPVVQGG. A helical membrane pass occupies residues 310–330; it reads VLLVATMIILVNLLVDLLYGV. At 331–339 the chain is on the cytoplasmic side; it reads VNPRIRHKK.

Belongs to the binding-protein-dependent transport system permease family. OppBC subfamily. As to quaternary structure, the complex is composed of two ATP-binding proteins (DppD and DppF), two transmembrane proteins (DppB and DppC) and a solute-binding protein (DppA).

The protein localises to the cell inner membrane. Its function is as follows. Part of the ABC transporter DppABCDF involved in dipeptide transport. Responsible for the translocation of the substrate across the membrane. This chain is Dipeptide transport system permease protein DppB (dppB), found in Escherichia coli O157:H7.